A 252-amino-acid chain; its full sequence is Uracil-DNA glycosylase (252 aa).

The active-site Proton acceptor is the Asp-87.

The protein belongs to the uracil-DNA glycosylase (UDG) superfamily. UNG family.

It is found in the host nucleus. The catalysed reaction is Hydrolyzes single-stranded DNA or mismatched double-stranded DNA and polynucleotides, releasing free uracil.. In terms of biological role, excises uracil residues from the DNA which can arise as a result of misincorporation of dUMP residues by DNA polymerase or deamination of cytosines. Therefore may reduce deleterious uracil incorporation into the viral genome, particularly in terminally differentiated cells which lack DNA repair enzymes. This is Uracil-DNA glycosylase (46) from Saimiri sciureus (Common squirrel monkey).